The following is a 420-amino-acid chain: Tyrosine--tRNA ligase (420 aa).

Residue Y36 participates in L-tyrosine binding. Positions 41–50 (PTADSLHIGH) match the 'HIGH' region motif. L-tyrosine contacts are provided by Y170 and Q174. Positions 231–235 (KFGKT) match the 'KMSKS' region motif. K234 is an ATP binding site. The S4 RNA-binding domain occupies 353-420 (RNIVEVIVET…KKKYFMVNYK (68 aa)).

This sequence belongs to the class-I aminoacyl-tRNA synthetase family. TyrS type 1 subfamily. As to quaternary structure, homodimer.

Its subcellular location is the cytoplasm. The enzyme catalyses tRNA(Tyr) + L-tyrosine + ATP = L-tyrosyl-tRNA(Tyr) + AMP + diphosphate + H(+). Functionally, catalyzes the attachment of tyrosine to tRNA(Tyr) in a two-step reaction: tyrosine is first activated by ATP to form Tyr-AMP and then transferred to the acceptor end of tRNA(Tyr). This is Tyrosine--tRNA ligase from Staphylococcus saprophyticus subsp. saprophyticus (strain ATCC 15305 / DSM 20229 / NCIMB 8711 / NCTC 7292 / S-41).